A 341-amino-acid polypeptide reads, in one-letter code: Tetraacyldisaccharide 4'-kinase (341 aa).

65–72 (TVGGSGKT) is a binding site for ATP.

This sequence belongs to the LpxK family.

The enzyme catalyses a lipid A disaccharide + ATP = a lipid IVA + ADP + H(+). The protein operates within glycolipid biosynthesis; lipid IV(A) biosynthesis; lipid IV(A) from (3R)-3-hydroxytetradecanoyl-[acyl-carrier-protein] and UDP-N-acetyl-alpha-D-glucosamine: step 6/6. Functionally, transfers the gamma-phosphate of ATP to the 4'-position of a tetraacyldisaccharide 1-phosphate intermediate (termed DS-1-P) to form tetraacyldisaccharide 1,4'-bis-phosphate (lipid IVA). The polypeptide is Tetraacyldisaccharide 4'-kinase (Shewanella woodyi (strain ATCC 51908 / MS32)).